Reading from the N-terminus, the 514-residue chain is L-Threonine dehydratase biosynthetic IlvA (514 aa).

At Lys-62 the chain carries N6-(pyridoxal phosphate)lysine. Residues Asn-89, 188–192 (GGGGL), and Ser-315 contribute to the pyridoxal 5'-phosphate site. 2 consecutive ACT-like domains span residues 339–411 (ALLA…DLSD) and 434–504 (RLYS…DESN).

It belongs to the serine/threonine dehydratase family. In terms of assembly, homotetramer. Requires pyridoxal 5'-phosphate as cofactor.

It carries out the reaction L-threonine = 2-oxobutanoate + NH4(+). Its pathway is amino-acid biosynthesis; L-isoleucine biosynthesis; 2-oxobutanoate from L-threonine: step 1/1. Its activity is regulated as follows. Isoleucine allosterically inhibits whereas valine allosterically activates this enzyme. Functionally, catalyzes the anaerobic formation of alpha-ketobutyrate and ammonia from threonine in a two-step reaction. The first step involved a dehydration of threonine and a production of enamine intermediates (aminocrotonate), which tautomerizes to its imine form (iminobutyrate). Both intermediates are unstable and short-lived. The second step is the nonenzymatic hydrolysis of the enamine/imine intermediates to form 2-ketobutyrate and free ammonia. In the low water environment of the cell, the second step is accelerated by RidA. This Salmonella typhimurium (strain LT2 / SGSC1412 / ATCC 700720) protein is L-Threonine dehydratase biosynthetic IlvA (ilvA).